Here is a 219-residue protein sequence, read N- to C-terminus: Leukocyte surface antigen CD53 (219 aa).

At 1-11 (MGMSSLKLLKF) the chain is on the cytoplasmic side. Residues 12-32 (VLFFFNLIFWFCGCCILGLGI) form a helical membrane-spanning segment. Topologically, residues 33-54 (YLLIHSKFGVLFHNLPSLTLGN) are extracellular. A helical membrane pass occupies residues 55 to 69 (VLVIVGSVIMVVAFL). The Cytoplasmic portion of the chain corresponds to 70-80 (GCMGSIKENKC). The helical transmembrane segment at 81 to 106 (LLMSFFVLLLIILLAEVTLAILLFVY) threads the bilayer. At 107–181 (EQKLKEYVAE…IQAKQWFHSN (75 aa)) the chain is on the extracellular side. N-linked (GlcNAc...) asparagine glycans are attached at residues Asn-129 and Asn-148. The chain crosses the membrane as a helical span at residues 182 to 206 (FLYIGITTICVCVIQVLGMSFALTL). Residues 207-219 (NCQIDKTSQVLGL) lie on the Cytoplasmic side of the membrane.

It belongs to the tetraspanin (TM4SF) family. In terms of assembly, interacts with SCIMP. Interacts with CD45/PTPRC. Interacts with IL7R. Interacts with RBL2 and PPP2CA.

It is found in the cell membrane. Its subcellular location is the cell junction. The protein localises to the membrane. It localises to the synapse. Structural component of specialized membrane microdomains known as tetraspanin-enriched microdomains (TERMs), which act as platforms for receptor clustering and signaling. Participates thereby in diverse biological functions such as cell signal transduction, adhesion, migration and protein trafficking. Plays a role in the activation of monocytes and B-cells. Acts as an essential regulator of B-cell development by promoting interleukin-7 receptor/IL7R signaling. Also promotes, in B-cells, the BCR signaling by recruiting PKC to the plasma membrane in order to phosphorylate its substrates. Plays an essential role in B- and T-cells homing to lymph nodes by stabilizing L-selectin/SELL cell surface expression. Also mediates metabolic and inflammatory functions in hepatocytes and adipose tissue by promoting TNF-alpha and LPS signaling independent of the immune compartment. The chain is Leukocyte surface antigen CD53 (CD53) from Bos taurus (Bovine).